The primary structure comprises 348 residues: MNNYFPRLKQFSAPATFFLTVACLVYPGENAHANASTPNPYTVAQTTASPSVAVENLSGFQGIITALNITPDGKYLAVATADNQITLIDLANQEVVYSQRSPVNNFADLAISADGQWLAIAADNNVDVRRVRDGMRVETLVGHTDKVSGVAFSPDGETIVSVSGGDRTIRIWERASGNLIQTLADNLGPTTSVVFTPDGSQFITGAIGQDRTIKFWDANTFELLGTSPQQPGFINGLAVTPDGRKLVGAVRNFVKAWNLADAKELFSVRGPSLEINTIAVSPNNRWVATANKEGTIMIFDLANGKQVTTLRGHQGWVLSLAFSPDGNTLYSGAEDKTVKIWDLSALAR.

WD repeat units lie at residues 59 to 98, 142 to 182, 185 to 226, 229 to 267, 270 to 309, and 312 to 347; these read GFQG…VVYS, GHTD…LIQT, DNLG…LLGT, QQPG…ELFS, GPSL…QVTT, and GHQG…SALA.

This is an uncharacterized protein from Synechocystis sp. (strain ATCC 27184 / PCC 6803 / Kazusa).